The following is a 95-amino-acid chain: Integration host factor subunit beta (95 aa).

It belongs to the bacterial histone-like protein family. In terms of assembly, heterodimer of an alpha and a beta chain.

This protein is one of the two subunits of integration host factor, a specific DNA-binding protein that functions in genetic recombination as well as in transcriptional and translational control. This is Integration host factor subunit beta from Shewanella halifaxensis (strain HAW-EB4).